The chain runs to 570 residues: MFS-type transporter ptmT (570 aa).

Residues Met-1–Thr-11 are compositionally biased toward polar residues. The segment at Met-1 to Gln-34 is disordered. 14 helical membrane passes run Gly-50–Leu-70, Trp-94–Tyr-114, Trp-121–Pro-141, Ala-151–Ile-171, Ala-182–Phe-202, Trp-210–Met-230, Gly-247–Leu-267, Asn-278–Ile-298, Ile-323–Phe-343, Ile-356–Ile-376, Val-379–Leu-399, Ile-413–Val-433, Val-445–Ala-465, and Val-517–Ile-537. A glycan (N-linked (GlcNAc...) asparagine) is linked at Asn-541. The tract at residues Pro-550 to Thr-570 is disordered. Positions Gly-561–Thr-570 are enriched in basic and acidic residues.

The protein belongs to the major facilitator superfamily. TCR/Tet family.

Its subcellular location is the cell membrane. MFS-type transporter; part of the gene cluster that mediates the biosynthesis of the indole diterpenes penitrems. May be involved in the efflux of penitrems. The polypeptide is MFS-type transporter ptmT (Penicillium ochrochloron).